Reading from the N-terminus, the 930-residue chain is Serine/threonine-protein kinase ATG1 (930 aa).

Residues 23–326 (FIIDREIGKG…FENFFAHHVV (304 aa)) form the Protein kinase domain. Residues 29–37 (IGKGSFAQV) and K52 each bind ATP. The active-site Proton acceptor is D166. 4 disordered regions span residues 336-468 (DDIP…TEEE), 504-563 (GQNN…SASP), 853-874 (ISSG…DTEE), and 904-930 (NQAK…YGST). Positions 337–350 (DIPKPPKRELETIR) are enriched in basic and acidic residues. Residues 377–393 (SPKSPRSSPRSSTVNSS) show a composition bias toward low complexity. Polar residues-rich tracts occupy residues 400-417 (RQSQ…HNSG) and 504-531 (GQNN…TTGA). The segment at 629–897 (AAQAIEEFAT…RLNMVRKKQQ (269 aa)) is ATG13-binding.

The protein belongs to the protein kinase superfamily. Ser/Thr protein kinase family. APG1/unc-51/ULK1 subfamily. As to quaternary structure, homodimer. Dimerization requires the presence of ATG13. Forms a ternary complex with ATG13 and ATG17.

The protein localises to the cytoplasm. It is found in the preautophagosomal structure membrane. The enzyme catalyses L-seryl-[protein] + ATP = O-phospho-L-seryl-[protein] + ADP + H(+). It carries out the reaction L-threonyl-[protein] + ATP = O-phospho-L-threonyl-[protein] + ADP + H(+). Functionally, serine/threonine protein kinase involved in the cytoplasm to vacuole transport (Cvt) and found to be essential in autophagy, where it is required for the formation of autophagosomes. Involved in the clearance of protein aggregates which cannot be efficiently cleared by the proteasome. Required for selective autophagic degradation of the nucleus (nucleophagy) as well as for mitophagy which contributes to regulate mitochondrial quantity and quality by eliminating the mitochondria to a basal level to fulfill cellular energy requirements and preventing excess ROS production. Also involved in endoplasmic reticulum-specific autophagic process, in selective removal of ER-associated degradation (ERAD) substrates. Plays a key role in ATG9 and ATG23 cycling through the pre-autophagosomal structure and is necessary to promote ATG18 binding to ATG9 through phosphorylation of ATG9. Catalyzes phosphorylation of ATG4, decreasing the interaction between ATG4 and ATG8 and impairing deconjugation of PE-conjugated forms of ATG8. Contributes to conidiation by regulating the conidial levels of the conidiation-related protein CP15 and mediates fungal oxidation resistance by controlling total superoxide dismutase (SOD) activity. This Beauveria bassiana (strain ARSEF 2860) (White muscardine disease fungus) protein is Serine/threonine-protein kinase ATG1.